The sequence spans 179 residues: MSGGKYVDSEGHLYTVPIREQGNIYKPNNKAMADEVSEKQQVYDAHTKEIDLVNRDPKHLNDDVVKIDFEDVIAEPEGTHSFDGIWKASFTTFTVTKYWFYRLLSALFGIPMALIWGIYFAILSFLHIWAVVPCIKSFLIEIQCISRVYSIYVHTFCDPLFEAIGKVFSNIRINMQKEI.

An N-acetylserine modification is found at Ser2. Residue Ser2 is modified to Phosphoserine. A required for homooligomerization region spans residues 2 to 95 (SGGKYVDSEG…WKASFTTFTV (94 aa)). Residues 2-105 (SGGKYVDSEG…TKYWFYRLLS (104 aa)) lie on the Cytoplasmic side of the membrane. Position 5 is an N6-acetyllysine; alternate (Lys5). Lys5 is covalently cross-linked (Glycyl lysine isopeptide (Lys-Gly) (interchain with G-Cter in ubiquitin); alternate). Position 6 is a phosphotyrosine (Tyr6). The residue at position 9 (Ser9) is a Phosphoserine. Tyr14 carries the phosphotyrosine; by ABL1 modification. Residue Tyr25 is modified to Phosphotyrosine. Glycyl lysine isopeptide (Lys-Gly) (interchain with G-Cter in ubiquitin) cross-links involve residues Lys26 and Lys30. Ser37 is subject to Phosphoserine. Residues Lys39, Lys48, and Lys58 each participate in a glycyl lysine isopeptide (Lys-Gly) (interchain with G-Cter in ubiquitin) cross-link. The segment at 83-95 (DGIWKASFTTFTV) is interaction with CAVIN3. Positions 106–126 (ALFGIPMALIWGIYFAILSFL) form an intramembrane region, helical. At 127-179 (HIWAVVPCIKSFLIEIQCISRVYSIYVHTFCDPLFEAIGKVFSNIRINMQKEI) the chain is on the cytoplasmic side. Positions 132–143 (VPCIKSFLIEIQ) are interacts with SPRY1, SPRY2, SPRY3 and SPRY4. 3 S-palmitoyl cysteine lipidation sites follow: Cys134, Cys144, and Cys157. The interacts with SPRY1, SPRY2, and SPRY4 stretch occupies residues 150–161 (SIYVHTFCDPLF). The interacts with SPRY1, SPRY2, SPRY3 and SPRY4 stretch occupies residues 168 to 179 (FSNIRINMQKEI).

The protein belongs to the caveolin family. Homooligomer. Interacts with GLIPR2. Interacts with NOSTRIN. Interacts with SNAP25 and STX1A. Interacts (via the N-terminus) with DPP4; the interaction is direct. Interacts with CTNNB1, CDH1 and JUP. Interacts with PACSIN2; this interaction induces membrane tubulation. Interacts with SLC7A9. Interacts with BMX and BTK. Interacts with TGFBR1. Interacts with CAVIN3 (via leucine-zipper domain) in a cholesterol-sensitive manner. Interacts with CAVIN1. Interacts with EHD2 in a cholesterol-dependent manner. Forms a ternary complex with UBXN6 and VCP; mediates CAV1 targeting to lysosomes for degradation. Interacts with ABCG1; this interaction regulates ABCG1-mediated cholesterol efflux. Interacts with NEU3; this interaction enhances NEU3 sialidase activity within caveola. Interacts (via C-terminus) with SPRY1, SPRY2 (via C-terminus), SPRY3, and SPRY4. Interacts with IGFBP5; this interaction allows trafficking of IGFBP5 from the plasma membrane to the nucleus. In terms of processing, phosphorylated at Tyr-14 by ABL1 in response to oxidative stress. Ubiquitinated. Undergo monoubiquitination and multi- and/or polyubiquitination. Monoubiquitination of N-terminal lysines promotes integration in a ternary complex with UBXN6 and VCP which promotes oligomeric CAV1 targeting to lysosomes for degradation. Ubiquitinated by ZNRF1; leading to degradation and modulation of the TLR4-mediated immune response.

Its subcellular location is the golgi apparatus membrane. It localises to the cell membrane. It is found in the membrane. The protein resides in the caveola. The protein localises to the membrane raft. In terms of biological role, may act as a scaffolding protein within caveolar membranes. Forms a stable heterooligomeric complex with CAV2 that targets to lipid rafts and drives caveolae formation. Mediates the recruitment of CAVIN proteins (CAVIN1/2/3/4) to the caveolae. Interacts directly with G-protein alpha subunits and can functionally regulate their activity. Involved in the costimulatory signal essential for T-cell receptor (TCR)-mediated T-cell activation. Its binding to DPP4 induces T-cell proliferation and NF-kappa-B activation in a T-cell receptor/CD3-dependent manner. Recruits CTNNB1 to caveolar membranes and may regulate CTNNB1-mediated signaling through the Wnt pathway. Negatively regulates TGFB1-mediated activation of SMAD2/3 by mediating the internalization of TGFBR1 from membrane rafts leading to its subsequent degradation. Binds 20(S)-hydroxycholesterol (20(S)-OHC). The protein is Caveolin-1 (CAV1) of Eulemur macaco macaco (Black lemur).